Here is a 293-residue protein sequence, read N- to C-terminus: MHPRFAKPLDTLSAPLKAALLPMLGDDFQARFTPDQVATLKAATGLDDRALRLALLPLAAACSVAPISKFFVGAIACGLSGNWYFGANMEFAGQGLFHSVHAEQSAISNAWLGGETGISEITVNYTPCGHCRQFMNELSTAKILKVSLPDDLSALQSFLPHSFGPADLDITDALMSPQAHDELTLVSDDPLWQAALAAARQSYAPYSQGYAAVALQFADGRIFCGRYAENAAFNPSLPPMQMACAHAVLGGEDLATIRRAVLLESKDGQISQQDSARATLKALGSVELEYQAV.

2 consecutive CMP/dCMP-type deaminase domains span residues 47 to 166 (DDRA…FGPA) and 186 to 293 (VSDD…YQAV). 88 to 90 (NME) provides a ligand contact to substrate. His101 provides a ligand contact to Zn(2+). Catalysis depends on Glu103, which acts as the Proton donor. Residues Cys128 and Cys131 each contribute to the Zn(2+) site.

The protein belongs to the cytidine and deoxycytidylate deaminase family. Homodimer. Zn(2+) serves as cofactor.

The enzyme catalyses cytidine + H2O + H(+) = uridine + NH4(+). It carries out the reaction 2'-deoxycytidine + H2O + H(+) = 2'-deoxyuridine + NH4(+). Functionally, this enzyme scavenges exogenous and endogenous cytidine and 2'-deoxycytidine for UMP synthesis. The polypeptide is Cytidine deaminase (Aeromonas hydrophila subsp. hydrophila (strain ATCC 7966 / DSM 30187 / BCRC 13018 / CCUG 14551 / JCM 1027 / KCTC 2358 / NCIMB 9240 / NCTC 8049)).